Reading from the N-terminus, the 381-residue chain is Homoserine O-succinyltransferase (381 aa).

The 316-residue stretch at 45–360 folds into the AB hydrolase-1 domain; it reads NAVLVCHALN…PHGHDAFLLD (316 aa). Catalysis depends on S151, which acts as the Nucleophile. Residue R221 coordinates substrate. Catalysis depends on residues D321 and H354. D355 contacts substrate.

Belongs to the AB hydrolase superfamily. MetX family. As to quaternary structure, homodimer.

It localises to the cytoplasm. It catalyses the reaction L-homoserine + succinyl-CoA = O-succinyl-L-homoserine + CoA. The protein operates within amino-acid biosynthesis; L-methionine biosynthesis via de novo pathway; O-succinyl-L-homoserine from L-homoserine: step 1/1. Its function is as follows. Transfers a succinyl group from succinyl-CoA to L-homoserine, forming succinyl-L-homoserine. The protein is Homoserine O-succinyltransferase of Paraburkholderia phytofirmans (strain DSM 17436 / LMG 22146 / PsJN) (Burkholderia phytofirmans).